Reading from the N-terminus, the 348-residue chain is Putative transport protein HI_0338 (348 aa).

9 consecutive transmembrane segments (helical) span residues 7–27 (LHRT…VKLA), 28–48 (AEIV…SPII), 60–80 (LAIT…VGLI), 139–159 (VLLN…VVIF), 196–216 (VIGY…GVFI), 223–243 (VQYA…PNIG), 245–265 (IIAA…GIGF), 267–287 (VAIG…PKMM), and 296–316 (LVVF…GMLL).

It belongs to the autoinducer-2 exporter (AI-2E) (TC 2.A.86) family.

Its subcellular location is the cell membrane. This is Putative transport protein HI_0338 from Haemophilus influenzae (strain ATCC 51907 / DSM 11121 / KW20 / Rd).